Here is a 352-residue protein sequence, read N- to C-terminus: Photosystem II protein D1 (352 aa).

An N-acetylthreonine modification is found at threonine 2. Threonine 2 carries the phosphothreonine modification. Transmembrane regions (helical) follow at residues 29-46 (YIGWFGVIMIPTLLTATS), 118-133 (HFLLGVCCYMGREWEL), and 142-156 (WIAVAYSAPVAAATA). Histidine 118 is a chlorophyll a binding site. Position 126 (tyrosine 126) interacts with pheophytin a. [CaMn4O5] cluster is bound by residues aspartate 170 and glutamate 189. Residues 197–218 (FHMLGVAGVFGGSLFSAMHGSL) traverse the membrane as a helical segment. Histidine 198 contacts chlorophyll a. A quinone-binding positions include histidine 215 and 264–265 (SF). Histidine 215 lines the Fe cation pocket. Histidine 272 provides a ligand contact to Fe cation. The chain crosses the membrane as a helical span at residues 274–288 (FLAAWPVVGIWFTAL). The [CaMn4O5] cluster site is built by histidine 332, glutamate 333, aspartate 342, and alanine 344. Residues 345–352 (SVEAPVVG) constitute a propeptide that is removed on maturation.

This sequence belongs to the reaction center PufL/M/PsbA/D family. PSII is composed of 1 copy each of membrane proteins PsbA, PsbB, PsbC, PsbD, PsbE, PsbF, PsbH, PsbI, PsbJ, PsbK, PsbL, PsbM, PsbT, PsbX, PsbY, PsbZ, Psb30/Ycf12, at least 3 peripheral proteins of the oxygen-evolving complex and a large number of cofactors. It forms dimeric complexes. The D1/D2 heterodimer binds P680, chlorophylls that are the primary electron donor of PSII, and subsequent electron acceptors. It shares a non-heme iron and each subunit binds pheophytin, quinone, additional chlorophylls, carotenoids and lipids. D1 provides most of the ligands for the Mn4-Ca-O5 cluster of the oxygen-evolving complex (OEC). There is also a Cl(-1) ion associated with D1 and D2, which is required for oxygen evolution. The PSII complex binds additional chlorophylls, carotenoids and specific lipids. serves as cofactor. Post-translationally, tyr-161 forms a radical intermediate that is referred to as redox-active TyrZ, YZ or Y-Z. In terms of processing, C-terminally processed by CTPA; processing is essential to allow assembly of the oxygen-evolving complex and thus photosynthetic growth.

It is found in the plastid. It localises to the chloroplast thylakoid membrane. The catalysed reaction is 2 a plastoquinone + 4 hnu + 2 H2O = 2 a plastoquinol + O2. In terms of biological role, photosystem II (PSII) is a light-driven water:plastoquinone oxidoreductase that uses light energy to abstract electrons from H(2)O, generating O(2) and a proton gradient subsequently used for ATP formation. It consists of a core antenna complex that captures photons, and an electron transfer chain that converts photonic excitation into a charge separation. The D1/D2 (PsbA/PsbD) reaction center heterodimer binds P680, the primary electron donor of PSII as well as several subsequent electron acceptors. In Zygnema circumcarinatum (Green alga), this protein is Photosystem II protein D1.